Reading from the N-terminus, the 339-residue chain is tRNA(Ile)-lysidine synthase (339 aa).

Residue 34–39 (SGGPDS) participates in ATP binding.

The protein belongs to the tRNA(Ile)-lysidine synthase family.

Its subcellular location is the cytoplasm. It carries out the reaction cytidine(34) in tRNA(Ile2) + L-lysine + ATP = lysidine(34) in tRNA(Ile2) + AMP + diphosphate + H(+). In terms of biological role, ligates lysine onto the cytidine present at position 34 of the AUA codon-specific tRNA(Ile) that contains the anticodon CAU, in an ATP-dependent manner. Cytidine is converted to lysidine, thus changing the amino acid specificity of the tRNA from methionine to isoleucine. The protein is tRNA(Ile)-lysidine synthase of Methylobacterium nodulans (strain LMG 21967 / CNCM I-2342 / ORS 2060).